The following is a 215-amino-acid chain: uncharacterized protein (215 aa).

The N-terminal stretch at 1–17 (MKKVLASATILSLMLVG) is a signal peptide. The disordered stretch occupies residues 17–110 (GCSNGGNDES…NKQQQSVQDN (94 aa)). Cys-18 carries the N-palmitoyl cysteine lipid modification. The S-diacylglycerol cysteine moiety is linked to residue Cys-18. The segment covering 25 to 69 (ESSHKDDSSKTEQKDKSSSQHDSKKDSKRNDTNNKQDNQENKSNK) has biased composition (basic and acidic residues). The span at 70 to 95 (EQTSNQNSNAGEQRTSERPTTNSNGI) shows a compositional bias: polar residues. Positions 96 to 110 (SSDNQNKQQQSVQDN) are enriched in low complexity.

Its subcellular location is the cell membrane. This is an uncharacterized protein from Staphylococcus epidermidis (strain ATCC 12228 / FDA PCI 1200).